The chain runs to 1216 residues: Tyrosine-protein kinase receptor ver-4 (1216 aa).

Residues 1–789 are Extracellular-facing; sequence MRVSLTEFLV…VKVAGASSSS (789 aa). N142, N195, N206, N245, N283, N333, N348, N384, N402, N412, N496, N508, N588, N599, N664, and N703 each carry an N-linked (GlcNAc...) asparagine glycan. Ig-like C2-type domains follow at residues 596 to 691 and 697 to 783; these read KSVN…TSIS and PPFL…VKVA. An intrachain disulfide couples C619 to C675. A disulfide bridge connects residues C721 and C765. A helical membrane pass occupies residues 790–810; sequence FFWLFITFFAFVVVGIVVSLL. Over 811–1216 the chain is Cytoplasmic; the sequence is WKLFGQKDLK…WVQKPTQLFF (406 aa). A Protein kinase domain is found at 870–1181; it reads LEILETLGSG…IKLFKNHIQY (312 aa). ATP contacts are provided by residues 876-884 and K908; that span reads LGSGQFGIV. The active-site Proton acceptor is D1042.

The protein belongs to the protein kinase superfamily. Tyr protein kinase family.

Its subcellular location is the cell membrane. The enzyme catalyses L-tyrosyl-[protein] + ATP = O-phospho-L-tyrosyl-[protein] + ADP + H(+). In terms of biological role, receptor tyrosine kinase which may be involved, downstream of pvf-1, in the positioning of ray 1, the most anterior ray sensillum in the male tail. The chain is Tyrosine-protein kinase receptor ver-4 from Caenorhabditis elegans.